We begin with the raw amino-acid sequence, 230 residues long: Cytidylate kinase (230 aa).

ATP is bound at residue 12-20 (GPSGAGKST).

Belongs to the cytidylate kinase family. Type 1 subfamily.

The protein resides in the cytoplasm. It carries out the reaction CMP + ATP = CDP + ADP. It catalyses the reaction dCMP + ATP = dCDP + ADP. This is Cytidylate kinase from Corynebacterium diphtheriae (strain ATCC 700971 / NCTC 13129 / Biotype gravis).